Reading from the N-terminus, the 1179-residue chain is Putative ankyrin repeat protein RF_0381 (1179 aa).

ANK repeat units follow at residues Asn282–Gln311, Asn604–Ala633, His637–Ala666, Asn670–Ala699, Asn703–Ala732, Asn736–Ala765, Ser769–Ala798, Asn802–Asn831, Lys833–Ala860, Ser864–Ala893, Ser897–Ala926, Ser930–Ala959, Ser963–Thr992, Asp996–Ala1025, Ser1029–Ala1058, Asp1062–Ala1091, Ser1095–Thr1124, and Ser1128–Leu1157.

This chain is Putative ankyrin repeat protein RF_0381, found in Rickettsia felis (strain ATCC VR-1525 / URRWXCal2) (Rickettsia azadi).